Reading from the N-terminus, the 409-residue chain is Cdc42 effector protein 1 (409 aa).

Residues 1-29 are disordered; that stretch reads MPGPQGGTGAPTMSLGKLSPVGWVSSSHG. Phosphoserine occurs at positions 19 and 27. Thr-34 carries the post-translational modification Phosphothreonine. The CRIB domain maps to 38-52; that stretch reads ISPPLGDFRHTMHVG. Residue Ser-39 is modified to Phosphoserine. An Omega-N-methylarginine modification is found at Arg-53. Residues Ser-65, Ser-77, Ser-101, Ser-113, Ser-121, and Ser-139 each carry the phosphoserine modification. The span at 167–189 shows a compositional bias: basic and acidic residues; that stretch reads PRVEKHSNRDRDRDPDHSQDREQ. The disordered stretch occupies residues 167 to 203; it reads PRVEKHSNRDRDRDPDHSQDREQSSFPSEPTPNPELR. A phosphoserine mark is found at Ser-191, Ser-205, Ser-207, and Ser-210. Tandem repeats lie at residues 235–241, 242–248, and 255–261. The tract at residues 235–284 is 3 X 7 AA tandem repeats of [PT]-[AT]-A-[ENT]-[PT]-[PTS]-[AG]; the sequence is PAAETPVPTANPPAPAANPAPTAKPPAHAITTLDAVTSLPASAVTSLPAP. Disordered stretches follow at residues 237 to 260 and 282 to 329; these read AETPVPTANPPAPAANPAPTAKPP and PAPA…FDRH. The span at 243–258 shows a compositional bias: pro residues; that stretch reads TANPPAPAANPAPTAK. Residues 282–291 are compositionally biased toward low complexity; the sequence is PAPAAASSPS. A phosphoserine mark is found at Ser-312, Ser-332, Ser-368, and Ser-371.

It belongs to the BORG/CEP family. In terms of assembly, interacts with RHOQ and CDC42, in a GTP-dependent manner.

The protein localises to the endomembrane system. The protein resides in the cytoplasm. It is found in the cytoskeleton. Probably involved in the organization of the actin cytoskeleton. Induced membrane extensions in fibroblasts. The polypeptide is Cdc42 effector protein 1 (Cdc42ep1) (Mus musculus (Mouse)).